A 368-amino-acid chain; its full sequence is Chorismate synthase (368 aa).

Arginine 46 serves as a coordination point for NADP(+). Residues 123 to 125, 240 to 241, glycine 285, 300 to 304, and arginine 326 each bind FMN; these read RSS, NA, and KPTPT.

The protein belongs to the chorismate synthase family. As to quaternary structure, homotetramer. FMNH2 is required as a cofactor.

The enzyme catalyses 5-O-(1-carboxyvinyl)-3-phosphoshikimate = chorismate + phosphate. Its pathway is metabolic intermediate biosynthesis; chorismate biosynthesis; chorismate from D-erythrose 4-phosphate and phosphoenolpyruvate: step 7/7. In terms of biological role, catalyzes the anti-1,4-elimination of the C-3 phosphate and the C-6 proR hydrogen from 5-enolpyruvylshikimate-3-phosphate (EPSP) to yield chorismate, which is the branch point compound that serves as the starting substrate for the three terminal pathways of aromatic amino acid biosynthesis. This reaction introduces a second double bond into the aromatic ring system. This chain is Chorismate synthase, found in Porphyromonas gingivalis (strain ATCC BAA-308 / W83).